The following is a 406-amino-acid chain: Leucine aminopeptidase 1 (406 aa).

Positions 1–18 are cleaved as a signal peptide; sequence MKVTNASLLALLLPAVSG. A propeptide spanning residues 19–94 is cleaved from the precursor; that stretch reads RFVETGEPDR…LRAMTASRKK (76 aa). The N-linked (GlcNAc...) asparagine glycan is linked to N186. Zn(2+) is bound by residues H194, D213, E252, and D279. N-linked (GlcNAc...) asparagine glycosylation is present at N306. C328 and C332 form a disulfide bridge. H361 is a Zn(2+) binding site.

This sequence belongs to the peptidase M28 family. M28E subfamily. Monomer. Zn(2+) serves as cofactor.

It is found in the secreted. Functionally, extracellular aminopeptidase that allows assimilation of proteinaceous substrates. This Chaetomium globosum (strain ATCC 6205 / CBS 148.51 / DSM 1962 / NBRC 6347 / NRRL 1970) (Soil fungus) protein is Leucine aminopeptidase 1 (LAP1).